The sequence spans 57 residues: Potassium channel toxin alpha-KTx 1.5 (57 aa).

The signal sequence occupies residues 1-20 (MKISFLLLALVICSIGWSEA). The residue at position 21 (Gln-21) is a Pyrrolidone carboxylic acid. Cystine bridges form between Cys-27–Cys-48, Cys-33–Cys-53, and Cys-37–Cys-55.

Belongs to the short scorpion toxin superfamily. Potassium channel inhibitor family. Alpha-KTx 01 subfamily. As to expression, expressed by the venom gland.

The protein localises to the secreted. In terms of biological role, potent blocker of both large-conductance calcium-activated potassium channels (KCa1.1/KCNMA1) and voltage-gated potassium channels (Kv1.3/KCNA3). Has also been shown to moderately inhibit Kv1.2/KCNA2 and weakly inhibit Kv1.1/KCNA1 channels, as well as 5-hydroxytryptamine 3 receptors (HTR3A). This is Potassium channel toxin alpha-KTx 1.5 from Olivierus martensii (Manchurian scorpion).